Reading from the N-terminus, the 73-residue chain is Translation initiation factor IF-1 (73 aa).

Positions 1-73 (MAKKEDTIVL…TKARVVYRHR (73 aa)) constitute an S1-like domain.

This sequence belongs to the IF-1 family. As to quaternary structure, component of the 30S ribosomal translation pre-initiation complex which assembles on the 30S ribosome in the order IF-2 and IF-3, IF-1 and N-formylmethionyl-tRNA(fMet); mRNA recruitment can occur at any time during PIC assembly.

It is found in the cytoplasm. Its function is as follows. One of the essential components for the initiation of protein synthesis. Stabilizes the binding of IF-2 and IF-3 on the 30S subunit to which N-formylmethionyl-tRNA(fMet) subsequently binds. Helps modulate mRNA selection, yielding the 30S pre-initiation complex (PIC). Upon addition of the 50S ribosomal subunit IF-1, IF-2 and IF-3 are released leaving the mature 70S translation initiation complex. This chain is Translation initiation factor IF-1, found in Chlamydia caviae (strain ATCC VR-813 / DSM 19441 / 03DC25 / GPIC) (Chlamydophila caviae).